Here is a 155-residue protein sequence, read N- to C-terminus: Small ribosomal subunit protein uS7c (155 aa).

It belongs to the universal ribosomal protein uS7 family. As to quaternary structure, part of the 30S ribosomal subunit.

The protein localises to the plastid. It localises to the chloroplast. In terms of biological role, one of the primary rRNA binding proteins, it binds directly to 16S rRNA where it nucleates assembly of the head domain of the 30S subunit. The chain is Small ribosomal subunit protein uS7c (rps7) from Marchantia polymorpha (Common liverwort).